The chain runs to 297 residues: TATA-box-binding protein (297 aa).

The segment at 52 to 116 (EEQQRQQQQA…ITPATPASES (65 aa)) is disordered. 2 stretches are compositionally biased toward low complexity: residues 56–78 (RQQQ…QTPQ) and 104–114 (MTPITPATPAS). Tandem repeats lie at residues 123–199 (LQNI…ARVV) and 213–290 (IQNM…YPIL).

The protein belongs to the TBP family. Belongs to the TFIID complex together with the TBP-associated factors (TAFs). Binds DNA as monomer. In terms of processing, the N-terminal domain is extensively phosphorylated.

The protein resides in the nucleus. Functionally, general transcription factor that functions at the core of the DNA-binding multiprotein factor TFIID. Binding of TFIID to the TATA box is the initial transcriptional step of the pre-initiation complex (PIC), playing a role in the activation of eukaryotic genes transcribed by RNA polymerase II. Members of the TBP family are differentially required to regulate transcription and development during early embryogenesis. Binds to the promoters of select genes. The protein is TATA-box-binding protein of Xenopus tropicalis (Western clawed frog).